A 54-amino-acid polypeptide reads, in one-letter code: Lectin alpha-1 chain (54 aa).

It belongs to the leguminous lectin family. As to quaternary structure, tetramer of two alpha and two beta chains.

The sequence is that of Lectin alpha-1 chain from Lathyrus cicera (Flat-pod pea).